Consider the following 608-residue polypeptide: Dihydroxy-acid dehydratase, chloroplastic (608 aa).

The N-terminal 34 residues, 1-34 (MQATIFSPRATLFPCKPLLPSHNVNSRRPSIISC), are a transit peptide targeting the chloroplast. S35 carries the N-acetylserine modification. Position 100 (C100) interacts with [2Fe-2S] cluster. D132 serves as a coordination point for Mg(2+). C173 is a [2Fe-2S] cluster binding site. D174 provides a ligand contact to Mg(2+). C245 is a [2Fe-2S] cluster binding site. Residue E497 coordinates Mg(2+). S523 acts as the Proton acceptor in catalysis.

It belongs to the IlvD/Edd family. It depends on [2Fe-2S] cluster as a cofactor. The cofactor is Mg(2+).

Its subcellular location is the plastid. The protein resides in the chloroplast. It catalyses the reaction (2R)-2,3-dihydroxy-3-methylbutanoate = 3-methyl-2-oxobutanoate + H2O. The catalysed reaction is (2R,3R)-2,3-dihydroxy-3-methylpentanoate = (S)-3-methyl-2-oxopentanoate + H2O. It functions in the pathway amino-acid biosynthesis; L-isoleucine biosynthesis; L-isoleucine from 2-oxobutanoate: step 3/4. It participates in amino-acid biosynthesis; L-valine biosynthesis; L-valine from pyruvate: step 3/4. Its activity is regulated as follows. Is highly competitively inhibited by the fungal sesquiterpenoid aspterric acid, which is effective as a herbicide in spray applications. Its function is as follows. Functions in the biosynthesis of branched-chain amino acids. Catalyzes the dehydration of (2R,3R)-2,3-dihydroxy-3-methylpentanoate (2,3-dihydroxy-3-methylvalerate) into 2-oxo-3-methylpentanoate (2-oxo-3-methylvalerate) and of (2R)-2,3-dihydroxy-3-methylbutanoate (2,3-dihydroxyisovalerate) into 2-oxo-3-methylbutanoate (2-oxoisovalerate), the penultimate precursor to L-isoleucine and L-valine, respectively. The chain is Dihydroxy-acid dehydratase, chloroplastic from Arabidopsis thaliana (Mouse-ear cress).